The sequence spans 172 residues: Photosystem I assembly protein Ycf3 (172 aa).

TPR repeat units lie at residues 35–68 (AFSY…EEDP), 72–105 (SYIL…NSQL), and 120–153 (GVKA…SPNN).

This sequence belongs to the Ycf3 family.

Its subcellular location is the plastid. The protein resides in the chloroplast thylakoid membrane. In terms of biological role, essential for the assembly of the photosystem I (PSI) complex. May act as a chaperone-like factor to guide the assembly of the PSI subunits. The sequence is that of Photosystem I assembly protein Ycf3 from Guillardia theta (Cryptophyte).